The chain runs to 142 residues: Large ribosomal subunit protein uL11 (142 aa).

This sequence belongs to the universal ribosomal protein uL11 family. Part of the ribosomal stalk of the 50S ribosomal subunit. Interacts with L10 and the large rRNA to form the base of the stalk. L10 forms an elongated spine to which L12 dimers bind in a sequential fashion forming a multimeric L10(L12)X complex. In terms of processing, one or more lysine residues are methylated.

Forms part of the ribosomal stalk which helps the ribosome interact with GTP-bound translation factors. This is Large ribosomal subunit protein uL11 from Photobacterium profundum (strain SS9).